The following is a 432-amino-acid chain: NADH-quinone oxidoreductase subunit D (432 aa).

This sequence belongs to the complex I 49 kDa subunit family. As to quaternary structure, NDH-1 is composed of 14 different subunits. Subunits NuoB, C, D, E, F, and G constitute the peripheral sector of the complex.

It is found in the cell membrane. The enzyme catalyses a quinone + NADH + 5 H(+)(in) = a quinol + NAD(+) + 4 H(+)(out). Its function is as follows. NDH-1 shuttles electrons from NADH, via FMN and iron-sulfur (Fe-S) centers, to quinones in the respiratory chain. The immediate electron acceptor for the enzyme in this species is believed to be a menaquinone. Couples the redox reaction to proton translocation (for every two electrons transferred, four hydrogen ions are translocated across the cytoplasmic membrane), and thus conserves the redox energy in a proton gradient. The chain is NADH-quinone oxidoreductase subunit D from Mycobacteroides abscessus (strain ATCC 19977 / DSM 44196 / CCUG 20993 / CIP 104536 / JCM 13569 / NCTC 13031 / TMC 1543 / L948) (Mycobacterium abscessus).